A 291-amino-acid chain; its full sequence is Light-independent protochlorophyllide reductase iron-sulfur ATP-binding protein (291 aa).

ATP contacts are provided by residues 10–15 (GIGKST) and K39. Residue S14 coordinates Mg(2+). [4Fe-4S] cluster is bound by residues C95 and C129. 180–181 (NR) is an ATP binding site.

This sequence belongs to the NifH/BchL/ChlL family. Homodimer. Protochlorophyllide reductase is composed of three subunits; ChlL, ChlN and ChlB. It depends on [4Fe-4S] cluster as a cofactor.

The protein localises to the plastid. It localises to the chloroplast. The enzyme catalyses chlorophyllide a + oxidized 2[4Fe-4S]-[ferredoxin] + 2 ADP + 2 phosphate = protochlorophyllide a + reduced 2[4Fe-4S]-[ferredoxin] + 2 ATP + 2 H2O. It participates in porphyrin-containing compound metabolism; chlorophyll biosynthesis (light-independent). Component of the dark-operative protochlorophyllide reductase (DPOR) that uses Mg-ATP and reduced ferredoxin to reduce ring D of protochlorophyllide (Pchlide) to form chlorophyllide a (Chlide). This reaction is light-independent. The L component serves as a unique electron donor to the NB-component of the complex, and binds Mg-ATP. This chain is Light-independent protochlorophyllide reductase iron-sulfur ATP-binding protein, found in Pinus contorta (Shore pine).